A 574-amino-acid chain; its full sequence is Phosphate permease PHO89 (574 aa).

At 1-5 (MALHQ) the chain is on the extracellular side. The helical transmembrane segment at 6 to 26 (FDYIFAIAMLFAFLDAFNIGA) threads the bilayer. The Cytoplasmic segment spans residues 27-43 (NDVANSFASSISSRSLK). Residues 44-64 (YWQAMVLAGLCEFLGAVLAGA) traverse the membrane as a helical segment. At 65–84 (RVSGTIKNNIIDSSIFTNDP) the chain is on the extracellular side. The chain crosses the membrane as a helical span at residues 85 to 105 (AVLMLTMTSALIGSSCWLTFA). The Cytoplasmic segment spans residues 106 to 117 (TAIGMPVSTTHS). The chain crosses the membrane as a helical span at residues 118–138 (IVGGTIGAGIAAGGANGVVWG). At 139–145 (WSGVSQI) the chain is on the extracellular side. The chain crosses the membrane as a helical span at residues 146-166 (IASWFIAPILAGAIAAIVFSI). Residues 167–184 (SRFSVLEVKSLERSIKNA) lie on the Cytoplasmic side of the membrane. A helical transmembrane segment spans residues 185-205 (LLLVGVLVFATFSILTMLIVW). Residues 206–222 (KGSPNLHLDDLSETETA) lie on the Extracellular side of the membrane. A helical transmembrane segment spans residues 223–243 (VSIVLTGAIASIVYFIFFYPF). The Cytoplasmic portion of the chain corresponds to 244–354 (YRRKVLDQDW…SLLKQGPKKW (111 aa)). A disordered region spans residues 301 to 332 (EDEENKAASNSNDSVKNKEDIQEVDLVRTETE). The segment covering 315-332 (VKNKEDIQEVDLVRTETE) has biased composition (basic and acidic residues). Residues 355–375 (PLLFWLVISHGWTQDVIHAQV) traverse the membrane as a helical segment. At 376–398 (NDRDMLSGDLKGMYERSKFYDNR) the chain is on the extracellular side. Residues 399–419 (VEYIYSVLQAITAATMSFAHG) traverse the membrane as a helical segment. The Cytoplasmic segment spans residues 420-447 (ANDVANATGPLSAVYVIWKTNTIGAKSE). Residues 448-468 (VPVWVLAYGGVALVIGCWTYG) traverse the membrane as a helical segment. At 469–503 (YNIIKNLGNKMILQSPSRGFSIELAVAITTVMATQ) the chain is on the extracellular side. The chain crosses the membrane as a helical span at residues 504–524 (LGIPTSTTQIAVGGIVAVGLC). The Cytoplasmic portion of the chain corresponds to 525 to 541 (NKDLKSVNWRMVAWCYS). Residues 542–562 (GWFLTLPIAGLIAGIINGIIL) traverse the membrane as a helical segment. Over 563–574 (NAPRFGVEYQMT) the chain is Extracellular.

The protein belongs to the inorganic phosphate transporter (PiT) (TC 2.A.20) family. Forms homodimers and higher order homooligomers.

The protein localises to the cell membrane. The catalysed reaction is 2 Na(+)(out) + phosphate(out) = 2 Na(+)(in) + phosphate(in). With respect to regulation, weakly stimulated by Li(+) and K(+). Inhibited by monensin. Inhibited by phosphonoacetic acid. Inhibited by methylphosphonate. Inhibited by dimethylphosphonate. In terms of biological role, sodium-phosphate symporter. Active in early growth phase. The sequence is that of Phosphate permease PHO89 (PHO89) from Saccharomyces cerevisiae (strain ATCC 204508 / S288c) (Baker's yeast).